The chain runs to 50 residues: Large ribosomal subunit protein bL33B (50 aa).

This sequence belongs to the bacterial ribosomal protein bL33 family.

In Ligilactobacillus salivarius (strain UCC118) (Lactobacillus salivarius), this protein is Large ribosomal subunit protein bL33B.